The sequence spans 348 residues: Protein RecA (348 aa).

Gly65–Thr72 contributes to the ATP binding site.

Belongs to the RecA family.

Its subcellular location is the cytoplasm. In terms of biological role, can catalyze the hydrolysis of ATP in the presence of single-stranded DNA, the ATP-dependent uptake of single-stranded DNA by duplex DNA, and the ATP-dependent hybridization of homologous single-stranded DNAs. It interacts with LexA causing its activation and leading to its autocatalytic cleavage. The protein is Protein RecA of Alteromonas mediterranea (strain DSM 17117 / CIP 110805 / LMG 28347 / Deep ecotype).